The following is a 351-amino-acid chain: Phenylalanine--tRNA ligase alpha subunit (351 aa).

E276 is a binding site for Mg(2+).

Belongs to the class-II aminoacyl-tRNA synthetase family. Phe-tRNA synthetase alpha subunit type 1 subfamily. As to quaternary structure, tetramer of two alpha and two beta subunits. Mg(2+) serves as cofactor.

It is found in the cytoplasm. It carries out the reaction tRNA(Phe) + L-phenylalanine + ATP = L-phenylalanyl-tRNA(Phe) + AMP + diphosphate + H(+). In Psychrobacter arcticus (strain DSM 17307 / VKM B-2377 / 273-4), this protein is Phenylalanine--tRNA ligase alpha subunit.